A 241-amino-acid polypeptide reads, in one-letter code: METESADIPPNQTLYVNNLYEKISKKKLIEQLLLLFSKYGPILEIVGSKSLKMRGQAFIVFKDITSASNALREMNGFNFLDRPMKIQYCKSKSDAVSKLDGTYMEKKREREENDKKGSNKKQDRKSTGQQQQQQKRPGAPTSTTSTTSPTTSNGTVSLQPRDDPPNKTLFVENLPDKCDSMMLSMLFSQFQGFKEVHMVESKKGIAFIEFEDEIKSGFAMTNLQHFKVTPEKPMVVSFAAQ.

Residues 12–91 enclose the RRM 1 domain; that stretch reads QTLYVNNLYE…RPMKIQYCKS (80 aa). Positions 99–126 are enriched in basic and acidic residues; sequence LDGTYMEKKREREENDKKGSNKKQDRKS. Residues 99-169 form a disordered region; sequence LDGTYMEKKR…PRDDPPNKTL (71 aa). Residues 129–152 are compositionally biased toward low complexity; that stretch reads QQQQQQKRPGAPTSTTSTTSPTTS. Residues 167–241 enclose the RRM 2 domain; sequence KTLFVENLPD…KPMVVSFAAQ (75 aa).

Belongs to the RRM U1 A/B'' family. In terms of assembly, identified in the spliceosome B complex. Identified in the spliceosome C complex.

The protein resides in the nucleus. Functionally, involved in pre-mRNA splicing as component of the spliceosome. Associated with sn-RNP U2, where it contributes to the binding of stem loop IV of U2 snRNA. This is U2 small nuclear ribonucleoprotein B'' (snrpb2) from Dictyostelium discoideum (Social amoeba).